The sequence spans 77 residues: Small ribosomal subunit protein bS16 (77 aa).

Belongs to the bacterial ribosomal protein bS16 family.

The protein is Small ribosomal subunit protein bS16 of Wolinella succinogenes (strain ATCC 29543 / DSM 1740 / CCUG 13145 / JCM 31913 / LMG 7466 / NCTC 11488 / FDC 602W) (Vibrio succinogenes).